The following is a 482-amino-acid chain: Chromosome stability protein 9 (482 aa).

Disordered regions lie at residues 239 to 263 (SSLR…VNKN) and 418 to 482 (SGLA…RRIR). Positions 240-249 (SLRNSSKNNN) are enriched in low complexity. Residues 250–263 (GTVTPSTSGRVNKN) show a composition bias toward polar residues. Low complexity predominate over residues 418 to 437 (SGLAFSSSSNSLQQSKLPKS). 2 stretches are compositionally biased toward polar residues: residues 440–453 (LKRS…TNTH) and 463–473 (RSSNTVLGSSK).

In terms of assembly, component of the synapsis initiation complex composed of at least ZIP2, ZIP3, MSH4 and MSH5. Also interacts with ZIP1, MRE11, RAD51 and RAD53.

It localises to the nucleus. The protein localises to the chromosome. Functionally, component of the synapsis initiation complex (SIC) necessary for the synaptonemal complex assembly. Stabilizes the ZIP2 component to the chromosomes. The SIC complex loads onto chromosomes and nucleates ZIP1 polymerization, a molecular zipper that acts to bring homologous chromosomes in close apposition, which is required for meiotic crossover. May also be involved in double strand break repair. The chain is Chromosome stability protein 9 (CST9) from Saccharomyces cerevisiae (strain ATCC 204508 / S288c) (Baker's yeast).